The following is a 260-amino-acid chain: Protein FAM220A (260 aa).

2 disordered regions span residues 1 to 75 and 129 to 158; these read MKAG…SKAS and GSDW…GRPG. Residues 35 to 47 show a composition bias toward polar residues; the sequence is RNPSPSVVPSWTD.

As to quaternary structure, interacts with transcriptional activator STAT3; the interaction occurs in both the nucleus and the cytoplasm, is enhanced by IL6 and promotes STAT3 dephosphorylation, leading to negative regulation of STAT3 transcriptional activator activity. Can interact with both unphosphorylated and phosphorylated STAT3 but interacts preferentially with phosphorylated STAT3 in the nucleus. Interacts with protein phosphatase PTPN2/TC45; this promotes interaction of PTPN2 with STAT3, leading to dephosphorylation of STAT3 by PTPN2. In terms of tissue distribution, expressed at high levels in the testis where it is detected within elongated spermatids during the late stages (steps 9-16) of haploid germ cell development and in the tubular lumen (at protein level).

It is found in the nucleus. The protein resides in the cytoplasm. It localises to the cytoplasmic vesicle. Its subcellular location is the secretory vesicle. The protein localises to the acrosome. Its function is as follows. Promotes dephosphorylation of transcriptional activator STAT3 by interacting with both STAT3 and protein phosphatase PTPN2. This promotes interaction of PTPN2 with STAT3 and mediates STAT3 dephosphorylation by PTPN2, leading to negative regulation of STAT3 transcriptional activator activity. May be required for spermiogenesis or sperm function. The polypeptide is Protein FAM220A (Mus musculus (Mouse)).